The following is a 368-amino-acid chain: N-acetylneuraminate epimerase (368 aa).

The N-terminal stretch at Met-1 to Ala-19 is a signal peptide. Kelch repeat units follow at residues Thr-40–Asp-84, Asn-86–Asn-137, Lys-139–Ala-173, His-174–Gly-219, Thr-222–Gly-265, Glu-287–Asn-336, and Leu-338–Gln-367. Catalysis depends on Glu-228, which acts as the Proton acceptor.

It belongs to the NanM family. Homodimer.

The protein resides in the periplasm. It carries out the reaction N-acetyl-alpha-neuraminate = N-acetyl-beta-neuraminate. Its function is as follows. Converts alpha-N-acetylneuranimic acid (Neu5Ac) to the beta-anomer, accelerating the equilibrium between the alpha- and beta-anomers. Probably facilitates sialidase-negative bacteria to compete successfully for limited amounts of extracellular Neu5Ac, which is likely taken up in the beta-anomer. In addition, the rapid removal of sialic acid from solution might be advantageous to the bacterium to damp down host responses. The protein is N-acetylneuraminate epimerase of Escherichia coli O9:H4 (strain HS).